A 179-amino-acid chain; its full sequence is Stathmin-2 (179 aa).

Residues 1–26 (MAKTAMAYKEKMKELSMLSLICSCFY) are membrane attachment. At S16 the chain carries Phosphoserine. Residues C22 and C24 are each lipidated (S-palmitoyl cysteine). The 142-residue stretch at 38-179 (DDMEVKQINK…NKELQVELSG (142 aa)) folds into the SLD domain. The tract at residues 39–96 (DMEVKQINKRASGQAFELILKPPSPISEAPRTLASPKKKDLSLEEIQKKLEAAEERRK) is regulatory/phosphorylation domain. A phosphoserine mark is found at S50, S62, S73, and S97. Positions 75–179 (KKKDLSLEEI…NKELQVELSG (105 aa)) form a coiled coil.

Belongs to the stathmin family. Interacts with MAPK8. Interacts with ITM2C. Interacts with KIFBP. Interacts (via the N-terminal region) with CIB1 (via C-terminal region); the interaction is direct, occurs in a calcium-dependent manner and attenuates the neurite outgrowth inhibition of STMN2. In terms of processing, sumoylated. Phosphorylated mostly by MAPK8, but also by MAPK9 and MAPK10 in the developing brain cortex. Post-translationally, N-terminal palmitoylation promotes specific anchoring to the cytosolic leaflet of Golgi membranes and subsequent vesicular trafficking along dendrites and axons. Neuronal Stathmins are substrates for palmitoyltransferases ZDHHC3, ZDHHC7 and ZDHHC15. In terms of tissue distribution, neuron specific.

The protein resides in the cytoplasm. It is found in the perinuclear region. It localises to the cell projection. The protein localises to the growth cone. Its subcellular location is the membrane. The protein resides in the axon. It is found in the golgi apparatus. It localises to the endosome. The protein localises to the lamellipodium. Its function is as follows. Regulator of microtubule stability. When phosphorylated by MAPK8, stabilizes microtubules and consequently controls neurite length in cortical neurons. In the developing brain, negatively regulates the rate of exit from multipolar stage and retards radial migration from the ventricular zone. The protein is Stathmin-2 (STMN2) of Homo sapiens (Human).